A 212-amino-acid polypeptide reads, in one-letter code: MNSFSTSAFGPVAFSLGLLLVLPAAFPAPVLPGEDSKDVAAPHSQPLTSSERIDKHIRYILDGISALRKETCNRSNMCDSTKEALAENNLNLPKMAEKDGCFQSGFNEDTCLVKIITGLLEFEVYLEYLQNRFESSEEQARAVQMSTKVLIQLLQKKAKNLDAITTPEPTTNASLLTKLQAQNQWLQDMTTHLILRSFKEFLQSSLRALRQM.

Positions 1–29 (MNSFSTSAFGPVAFSLGLLLVLPAAFPAP) are cleaved as a signal peptide. 2 disulfide bridges follow: C72-C78 and C101-C111. N73 carries N-linked (GlcNAc...) asparagine glycosylation. N172 is a glycosylation site (N-linked (GlcNAc...) asparagine).

This sequence belongs to the IL-6 superfamily. Component of a hexamer of two molecules each of IL6, IL6R and IL6ST; first binds to IL6R to associate with the signaling subunit IL6ST. Interacts with IL6R (via the N-terminal ectodomain); this interaction may be affected by IL6R-binding with SORL1, hence decreasing IL6 cis signaling. Interacts with SORL1 (via the N-terminal ectodomain); this interaction leads to IL6 internalization and lysosomal degradation. May form a trimeric complex with the soluble SORL1 ectodomain and soluble IL6R receptor; this interaction might stabilize circulating IL6, hence promoting IL6 trans signaling.

The protein resides in the secreted. Its function is as follows. Cytokine with a wide variety of biological functions in immunity, tissue regeneration, and metabolism. Binds to IL6R, then the complex associates to the signaling subunit IL6ST/gp130 to trigger the intracellular IL6-signaling pathway. The interaction with the membrane-bound IL6R and IL6ST stimulates 'classic signaling', whereas the binding of IL6 and soluble IL6R to IL6ST stimulates 'trans-signaling'. Alternatively, 'cluster signaling' occurs when membrane-bound IL6:IL6R complexes on transmitter cells activate IL6ST receptors on neighboring receiver cells. IL6 is a potent inducer of the acute phase response. Rapid production of IL6 contributes to host defense during infection and tissue injury, but excessive IL6 synthesis is involved in disease pathology. In the innate immune response, is synthesized by myeloid cells, such as macrophages and dendritic cells, upon recognition of pathogens through toll-like receptors (TLRs) at the site of infection or tissue injury. In the adaptive immune response, is required for the differentiation of B cells into immunoglobulin-secreting cells. Plays a major role in the differentiation of CD4(+) T cell subsets. Essential factor for the development of T follicular helper (Tfh) cells that are required for the induction of germinal-center formation. Required to drive naive CD4(+) T cells to the Th17 lineage. Also required for proliferation of myeloma cells and the survival of plasmablast cells. In terms of biological role, acts as an essential factor in bone homeostasis and on vessels directly or indirectly by induction of VEGF, resulting in increased angiogenesis activity and vascular permeability. Induces, through 'trans-signaling' and synergistically with IL1B and TNF, the production of VEGF. Involved in metabolic controls, is discharged into the bloodstream after muscle contraction increasing lipolysis and improving insulin resistance. 'Trans-signaling' in central nervous system also regulates energy and glucose homeostasis. Mediates, through GLP-1, crosstalk between insulin-sensitive tissues, intestinal L cells and pancreatic islets to adapt to changes in insulin demand. Also acts as a myokine. Plays a protective role during liver injury, being required for maintenance of tissue regeneration. Also has a pivotal role in iron metabolism by regulating HAMP/hepcidin expression upon inflammation or bacterial infection. Through activation of IL6ST-YAP-NOTCH pathway, induces inflammation-induced epithelial regeneration. In Cercocebus atys (Sooty mangabey), this protein is Interleukin-6 (IL6).